A 107-amino-acid chain; its full sequence is Growth-regulated alpha protein (107 aa).

The first 34 residues, methionine 1–glycine 34, serve as a signal peptide directing secretion. Cystine bridges form between cysteine 43–cysteine 69 and cysteine 45–cysteine 85.

It belongs to the intercrine alpha (chemokine CxC) family. In terms of processing, N-terminal processed forms GRO-alpha(4-73), GRO-alpha(5-73) and GRO-alpha(6-73) are produced by proteolytic cleavage after secretion from peripheral blood monocytes.

The protein resides in the secreted. Has chemotactic activity for neutrophils. May play a role in inflammation and exerts its effects on endothelial cells in an autocrine fashion. In vitro, the processed forms GRO-alpha(4-73), GRO-alpha(5-73) and GRO-alpha(6-73) show a 30-fold higher chemotactic activity. This is Growth-regulated alpha protein (CXCL1) from Homo sapiens (Human).